A 512-amino-acid polypeptide reads, in one-letter code: Alpha-amylase (512 aa).

The signal sequence occupies residues 1–15 (MKLFVLIALFGLGFA). Disulfide bonds link Cys43–Cys101, Cys85–Cys130, and Cys156–Cys175. Positions 115, 173, and 182 each coordinate Ca(2+). Residue Arg210 participates in chloride binding. Residue Asp212 is the Nucleophile of the active site. His216 contacts Ca(2+). Glu248 functions as the Proton donor in the catalytic mechanism. Position 352 (Arg352) interacts with chloride. 2 disulfides stabilise this stretch: Cys394/Cys400 and Cys466/Cys478. A glycan (N-linked (GlcNAc...) asparagine) is linked at Asn496.

The protein belongs to the glycosyl hydrolase 13 family. Ca(2+) is required as a cofactor. Chloride serves as cofactor.

The protein resides in the secreted. It carries out the reaction Endohydrolysis of (1-&gt;4)-alpha-D-glucosidic linkages in polysaccharides containing three or more (1-&gt;4)-alpha-linked D-glucose units.. In terms of biological role, catalyzes the hydrolysis of alpha-1,4 glycosidic linkages in starch, glycogen and similar oligosaccharides. The sequence is that of Alpha-amylase from Oryzias latipes (Japanese rice fish).